The following is a 291-amino-acid chain: Nitrogenase iron protein (291 aa).

11–18 lines the ATP pocket; that stretch reads GKGGIGKS. Cys99 lines the [4Fe-4S] cluster pocket. Residue Arg102 is modified to ADP-ribosylarginine; by dinitrogenase reductase ADP-ribosyltransferase. Position 133 (Cys133) interacts with [4Fe-4S] cluster.

This sequence belongs to the NifH/BchL/ChlL family. In terms of assembly, homodimer. Requires [4Fe-4S] cluster as cofactor. The reversible ADP-ribosylation of Arg-102 inactivates the nitrogenase reductase and regulates nitrogenase activity.

It carries out the reaction N2 + 8 reduced [2Fe-2S]-[ferredoxin] + 16 ATP + 16 H2O = H2 + 8 oxidized [2Fe-2S]-[ferredoxin] + 2 NH4(+) + 16 ADP + 16 phosphate + 6 H(+). The key enzymatic reactions in nitrogen fixation are catalyzed by the nitrogenase complex, which has 2 components: the iron protein and the molybdenum-iron protein. The sequence is that of Nitrogenase iron protein from Cereibacter sphaeroides (strain ATCC 17023 / DSM 158 / JCM 6121 / CCUG 31486 / LMG 2827 / NBRC 12203 / NCIMB 8253 / ATH 2.4.1.) (Rhodobacter sphaeroides).